The sequence spans 128 residues: Fluoride-specific ion channel FluC (128 aa).

A run of 4 helical transmembrane segments spans residues 5–25 (IVAIFVGAGLGALLRWFLSIG), 35–55 (LGTLVSNLIGGYLIGIAVVAF), 67–87 (LFVITGFMGGLTTFSTYSVEV), and 96–116 (FGWALAVAALHLIGSFTLTGL). Gly75 and Thr78 together coordinate Na(+).

It belongs to the fluoride channel Fluc/FEX (TC 1.A.43) family.

The protein localises to the cell inner membrane. It catalyses the reaction fluoride(in) = fluoride(out). Its activity is regulated as follows. Na(+) is not transported, but it plays an essential structural role and its presence is essential for fluoride channel function. In terms of biological role, fluoride-specific ion channel. Important for reducing fluoride concentration in the cell, thus reducing its toxicity. The polypeptide is Fluoride-specific ion channel FluC (Burkholderia thailandensis (strain ATCC 700388 / DSM 13276 / CCUG 48851 / CIP 106301 / E264)).